We begin with the raw amino-acid sequence, 765 residues long: DNA topoisomerase 1 (765 aa).

Over residues 1–23 the composition is skewed to basic and acidic residues; the sequence is MSGDHLHNDSQIEADFRLNDSHK. Positions 1–199 are disordered; it reads MSGDHLHNDS…NKKKKPKKEE (199 aa). N-acetylserine is present on Ser2. Phosphoserine occurs at positions 2 and 10. Residues 24-39 are compositionally biased toward basic residues; that stretch reads HKDKHKDREHRHKEHK. Over residues 40-108 the composition is skewed to basic and acidic residues; the sequence is KEKDREKSKH…DAKIKKEKEN (69 aa). Ser57 bears the Phosphoserine mark. Residue Lys101 forms a Glycyl lysine isopeptide (Lys-Gly) (interchain with G-Cter in SUMO2) linkage. A Glycyl lysine isopeptide (Lys-Gly) (interchain with G-Cter in SUMO); alternate cross-link involves residue Lys103. A Glycyl lysine isopeptide (Lys-Gly) (interchain with G-Cter in SUMO2); alternate cross-link involves residue Lys103. Phosphoserine is present on Ser112. Residue Lys117 forms a Glycyl lysine isopeptide (Lys-Gly) (interchain with G-Cter in SUMO); alternate linkage. Lys117 participates in a covalent cross-link: Glycyl lysine isopeptide (Lys-Gly) (interchain with G-Cter in SUMO2); alternate. Residue Lys117 forms a Glycyl lysine isopeptide (Lys-Gly) (interchain with G-Cter in SUMO1); alternate linkage. The segment covering 129–166 has biased composition (basic and acidic residues); sequence PKEDIKPLKRPRDEDDADYKPKKIKTEDTKKEKKRKLE. Glycyl lysine isopeptide (Lys-Gly) (interchain with G-Cter in SUMO2) cross-links involve residues Lys134 and Lys148. A Glycyl lysine isopeptide (Lys-Gly) (interchain with G-Cter in SUMO); alternate cross-link involves residue Lys153. A Glycyl lysine isopeptide (Lys-Gly) (interchain with G-Cter in SUMO2); alternate cross-link involves residue Lys153. Glycyl lysine isopeptide (Lys-Gly) (interchain with G-Cter in SUMO2) cross-links involve residues Lys158 and Lys164. Lys172 participates in a covalent cross-link: Glycyl lysine isopeptide (Lys-Gly) (interchain with G-Cter in SUMO2); alternate. An N6-acetyllysine; alternate modification is found at Lys172. The segment covering 179-199 has biased composition (basic and acidic residues); sequence KDKDKKVPEPDNKKKKPKKEE. A Glycyl lysine isopeptide (Lys-Gly) (interchain with G-Cter in SUMO2) cross-link involves residue Lys204. N6-acetyllysine is present on Lys280. Lys336 is covalently cross-linked (Glycyl lysine isopeptide (Lys-Gly) (interchain with G-Cter in SUMO2)). 2 interaction with DNA regions span residues 425–426 and 488–493; these read KY and RAGNEK. Residues 432–765 enclose the Topo IB-type catalytic domain; it reads SSRIKGEKDW…IDMADEDYEF (334 aa). At Ser506 the chain carries Phosphoserine; by CK2. Lys549 is covalently cross-linked (Glycyl lysine isopeptide (Lys-Gly) (interchain with G-Cter in SUMO2)). The interval 585–587 is interaction with DNA; sequence TAK. Residues Lys642, Lys700, and Lys712 each participate in a glycyl lysine isopeptide (Lys-Gly) (interchain with G-Cter in SUMO2) cross-link. Catalysis depends on Tyr723, which acts as the O-(3'-phospho-DNA)-tyrosine intermediate.

Belongs to the type IB topoisomerase family. In terms of assembly, monomer. Interacts with ERCC6. Interacts with TPRN; TPRN interacts with a number of DNA damage response proteins, is recruited to sites of DNA damage and may play a role in DNA damage repair. As to quaternary structure, (Microbial infection) Interacts with SV40 Large T antigen; this interactions allows viral DNA replication. Sumoylated. Lys-117 is the main site of sumoylation. Sumoylation plays a role in partitioning TOP1 between nucleoli and nucleoplasm. Levels are dramatically increased on camptothecin (CPT) treatment. In terms of processing, phosphorylation at Ser-506 by CK2 increases binding to supercoiled DNA and sensitivity to camptothecin. Endothelial cells.

It localises to the nucleus. The protein resides in the nucleolus. The protein localises to the nucleoplasm. It catalyses the reaction ATP-independent breakage of single-stranded DNA, followed by passage and rejoining.. Specifically inhibited by camptothecin (CPT), a plant alkaloid with antitumor activity. In terms of biological role, releases the supercoiling and torsional tension of DNA introduced during the DNA replication and transcription by transiently cleaving and rejoining one strand of the DNA duplex. Introduces a single-strand break via transesterification at a target site in duplex DNA. The scissile phosphodiester is attacked by the catalytic tyrosine of the enzyme, resulting in the formation of a DNA-(3'-phosphotyrosyl)-enzyme intermediate and the expulsion of a 5'-OH DNA strand. The free DNA strand then rotates around the intact phosphodiester bond on the opposing strand, thus removing DNA supercoils. Finally, in the religation step, the DNA 5'-OH attacks the covalent intermediate to expel the active-site tyrosine and restore the DNA phosphodiester backbone. Regulates the alternative splicing of tissue factor (F3) pre-mRNA in endothelial cells. Involved in the circadian transcription of the core circadian clock component BMAL1 by altering the chromatin structure around the ROR response elements (ROREs) on the BMAL1 promoter. The polypeptide is DNA topoisomerase 1 (TOP1) (Homo sapiens (Human)).